The following is a 92-amino-acid chain: MPLSQEEKQRIINEFKTHETDTGSPEVQIALLTHRINELTEHLRVHKKDHHSRRGLLKMVGQRRALLVYLNKISPERYAKLIDRLNIRTVIR.

The protein belongs to the universal ribosomal protein uS15 family. In terms of assembly, part of the 30S ribosomal subunit. Forms a bridge to the 50S subunit in the 70S ribosome, contacting the 23S rRNA.

Functionally, one of the primary rRNA binding proteins, it binds directly to 16S rRNA where it helps nucleate assembly of the platform of the 30S subunit by binding and bridging several RNA helices of the 16S rRNA. Forms an intersubunit bridge (bridge B4) with the 23S rRNA of the 50S subunit in the ribosome. In Symbiobacterium thermophilum (strain DSM 24528 / JCM 14929 / IAM 14863 / T), this protein is Small ribosomal subunit protein uS15.